The primary structure comprises 127 residues: LIM domain-containing protein 2 (127 aa).

M1 bears the N-acetylmethionine mark. Residues 1–24 form a disordered region; that stretch reads MFQAAGAAQATPSHDAKGGGSSTV. An LIM zinc-binding domain is found at 38-98; it reads ETCAACQKTV…KPHFQQLFKS (61 aa). Residues C40, C43, H61, C64, C67, C70, C88, and H91 each coordinate Zn(2+).

As to quaternary structure, interacts with ILK.

It is found in the cytoplasm. The protein localises to the nucleus. Its function is as follows. Acts as an activator of the protein-kinase ILK, thereby regulating cell motility. The protein is LIM domain-containing protein 2 of Homo sapiens (Human).